The following is a 68-amino-acid chain: Conotoxin Eb11.7 (68 aa).

The first 26 residues, 1–26 (MMFRLTSVSCFLLVIVCLNLFQVVLT), serve as a signal peptide directing secretion. Intrachain disulfides connect cysteine 29-cysteine 43, cysteine 36-cysteine 48, cysteine 42-cysteine 52, and cysteine 47-cysteine 56. Phenylalanine amide is present on phenylalanine 60. Residues 64-68 (ATFQE) constitute a propeptide that is removed on maturation.

This sequence belongs to the conotoxin I2 superfamily. Expressed by the venom duct.

Its subcellular location is the secreted. The sequence is that of Conotoxin Eb11.7 from Conus eburneus (Ivory cone).